The chain runs to 412 residues: Inactive serine protease 35 (412 aa).

An N-terminal signal peptide occupies residues 1 to 23 (MGAMFFGLMLFTLGWTLIDGSES). Asn-110 is a glycosylation site (N-linked (GlcNAc...) asparagine). The 284-residue stretch at 124–407 (VYGTDSRFSI…ICLWMHGDDA (284 aa)) folds into the Peptidase S1 domain. A disulfide bridge links Cys-154 with Cys-170. A compositionally biased stretch (basic residues) spans 192–207 (RNKGGGKRRRGSRRNR). A disordered region spans residues 192–246 (RNKGGGKRRRGSRRNRREVSGAGREGSQDSLKETAKAGRRRKGSARRQRAADGRP). A compositionally biased stretch (basic and acidic residues) spans 217 to 227 (GSQDSLKETAK). Residues 228–239 (AGRRRKGSARRQ) are compositionally biased toward basic residues.

The protein belongs to the peptidase S1 family.

The protein localises to the secreted. In Bos taurus (Bovine), this protein is Inactive serine protease 35 (PRSS35).